A 714-amino-acid chain; its full sequence is EtfAB:quinone oxidoreductase (714 aa).

6 consecutive transmembrane segments (helical) span residues 25-45, 87-107, 125-145, 164-184, 207-227, and 236-256; these read YEWLIYVIMLIPVSVFLFGFW, AGWMHAFLFWGFLVLFLAAGI, IGFSWVVDVLGFLALIGVMVL, DGWIILLIFAILLTGYFIEGL, PFGWMFASFFGSMSVDAMLMW, and MAIAFLFIALVPFTKLWHIFA. 4Fe-4S ferredoxin-type domains follow at residues 293–324 and 375–405; these read WKDLLDLDSCIRCGRCQENCPAYNTGKHLNPK and YDVVGSETIWDCTNCRACMEHCPMFIEHIPK. [4Fe-4S] cluster is bound by residues cysteine 302, cysteine 305, cysteine 308, cysteine 312, cysteine 386, cysteine 389, cysteine 392, and cysteine 396.

In terms of assembly, might constitute a membrane-associated complex with EtfA (Swol_0697), EtfB (Swol_0696), and the butyryl-CoA dehydrogenase Swol_1933 and/or Swol_2052. Requires [4Fe-4S] cluster as cofactor.

Its subcellular location is the cell membrane. It participates in lipid metabolism; butanoate metabolism. In terms of biological role, oxidoreductase involved in syntrophic growth of S.wolfei with butyrate. Is presumed to link the electron flow from butyryl-CoA dehydrogenases to the membrane, in conjunction with the electron transfer flavoprotein EtfAB. May transfer electrons to the menaquinone pool of the membrane. This chain is EtfAB:quinone oxidoreductase, found in Syntrophomonas wolfei subsp. wolfei (strain DSM 2245B / Goettingen).